The following is a 509-amino-acid chain: Cobyric acid synthase (509 aa).

The GATase cobBQ-type domain maps to 262-459 (EIKVGIIKLP…IHGIFENDNW (198 aa)). Residue C343 is the Nucleophile of the active site. H451 is a catalytic residue.

This sequence belongs to the CobB/CobQ family. CobQ subfamily.

Its pathway is cofactor biosynthesis; adenosylcobalamin biosynthesis. Its function is as follows. Catalyzes amidations at positions B, D, E, and G on adenosylcobyrinic A,C-diamide. NH(2) groups are provided by glutamine, and one molecule of ATP is hydrogenolyzed for each amidation. This chain is Cobyric acid synthase, found in Prochlorococcus marinus (strain AS9601).